The following is a 1043-amino-acid chain: Sucrose-phosphate synthase 1 (1043 aa).

Positions 95–117 (EEKEAQRLAKRRLEREKGRREAT) are enriched in basic and acidic residues. Residues 95-127 (EEKEAQRLAKRRLEREKGRREATADMSEEFSEG) are disordered. Residues S121, S125, S152, and S155 each carry the phosphoserine modification. Positions 670-693 (PRHPQWQSDDGGDNSEPESPSDSL) are disordered.

The protein belongs to the glycosyltransferase 1 family. In terms of assembly, homodimer or homotetramer. In terms of processing, phosphorylated at Ser-152 upon sucrose supply. In terms of tissue distribution, expressed in seeds, stems, rosette leaves, flowers and siliques. Highly expressed in maturing nectaries.

The catalysed reaction is beta-D-fructose 6-phosphate + UDP-alpha-D-glucose = sucrose 6(F)-phosphate + UDP + H(+). It participates in glycan biosynthesis; sucrose biosynthesis; sucrose from D-fructose 6-phosphate and UDP-alpha-D-glucose: step 1/2. With respect to regulation, activity is regulated by phosphorylation and moderated by concentration of metabolites and light. Its function is as follows. Plays a major role in photosynthetic sucrose synthesis by catalyzing the rate-limiting step of sucrose biosynthesis from UDP-glucose and fructose- 6-phosphate. Involved in the regulation of carbon partitioning in the leaves of plants. May regulate the synthesis of sucrose and therefore play a major role as a limiting factor in the export of photoassimilates out of the leaf. Plays a role for sucrose availability that is essential for plant growth and fiber elongation. Required for nectar secretion. The chain is Sucrose-phosphate synthase 1 (SPS1) from Arabidopsis thaliana (Mouse-ear cress).